A 54-amino-acid polypeptide reads, in one-letter code: UPF0391 membrane protein BAV1230 (54 aa).

A run of 2 helical transmembrane segments spans residues A5 to A25 and A27 to L47.

This sequence belongs to the UPF0391 family.

The protein localises to the cell membrane. This Bordetella avium (strain 197N) protein is UPF0391 membrane protein BAV1230.